The chain runs to 315 residues: 4-diphosphocytidyl-2-C-methyl-D-erythritol kinase (315 aa).

Lys8 is a catalytic residue. 93–103 (PVAAGLAGGSS) is a binding site for ATP. Asp135 is a catalytic residue.

Belongs to the GHMP kinase family. IspE subfamily.

It catalyses the reaction 4-CDP-2-C-methyl-D-erythritol + ATP = 4-CDP-2-C-methyl-D-erythritol 2-phosphate + ADP + H(+). The protein operates within isoprenoid biosynthesis; isopentenyl diphosphate biosynthesis via DXP pathway; isopentenyl diphosphate from 1-deoxy-D-xylulose 5-phosphate: step 3/6. Its function is as follows. Catalyzes the phosphorylation of the position 2 hydroxy group of 4-diphosphocytidyl-2C-methyl-D-erythritol. In Heliobacterium modesticaldum (strain ATCC 51547 / Ice1), this protein is 4-diphosphocytidyl-2-C-methyl-D-erythritol kinase.